We begin with the raw amino-acid sequence, 689 residues long: FAST kinase domain-containing protein 2, mitochondrial (689 aa).

2 positions are modified to phosphoserine: Ser-113 and Ser-126. In terms of domain architecture, RAP spans 617-674 (VAVLCVPKSVYCLNSCHPRGLMAMKIRHLNVMGFHVILIHNWELKKLKMEDAVTFVRK).

Belongs to the FAST kinase family. Monomer. Found in a complex with GRSF1, DDX28, DHX30 and FASTKD5. Associates with the 16S mitochondrial rRNA (16S mt-rRNA). Forms a regulatory protein-RNA complex, consisting of RCC1L, NGRN, RPUSD3, RPUSD4, TRUB2, FASTKD2 and 16S mt-rRNA. In terms of tissue distribution, ubiquitously expressed. Expression detected in spleen, testis, colon, heart, smooth muscle, kidney, brain, lung, liver, brown and white adipose tissue with highest expression in testis, heart and smooth muscle.

It is found in the mitochondrion matrix. The protein localises to the mitochondrion nucleoid. Its function is as follows. Plays an important role in assembly of the mitochondrial large ribosomal subunit. As a component of a functional protein-RNA module, consisting of RCC1L, NGRN, RPUSD3, RPUSD4, TRUB2, FASTKD2 and 16S mitochondrial ribosomal RNA (16S mt-rRNA), controls 16S mt-rRNA abundance and is required for intra-mitochondrial translation. May play a role in mitochondrial apoptosis. The sequence is that of FAST kinase domain-containing protein 2, mitochondrial (Fastkd2) from Mus musculus (Mouse).